We begin with the raw amino-acid sequence, 1106 residues long: Voltage-dependent calcium channel subunit alpha-2/delta-1 (1106 aa).

The signal sequence occupies residues 1–26 (MAAGRPLAWTLTLWQAWLILIGPSSE). Topologically, residues 27–1076 (EPFPSAVTIK…VLEDYTDCGG (1050 aa)) are extracellular. N-linked (GlcNAc...) asparagine glycosylation is present at Asn94. The residue at position 121 (Ser121) is a Phosphoserine. 2 N-linked (GlcNAc...) asparagine glycosylation sites follow: Asn138 and Asn186. One can recognise a VWFA domain in the interval 255–432 (DMLILVDVSG…INTQEYLDVL (178 aa)). Asp261, Ser263, and Ser265 together coordinate a divalent metal cation. The MIDAS-like motif motif lies at 261 to 265 (DVSGS). Asn326 and Asn350 each carry an N-linked (GlcNAc...) asparagine glycan. Cys406 and Cys1062 are disulfide-bonded. Positions 448–539 (WTNVYLDALE…QPKPIGVGIP (92 aa)) constitute a Cache domain. Asn615, Asn784, and Asn891 each carry an N-linked (GlcNAc...) asparagine glycan. The helical transmembrane segment at 1077-1097 (VSGLNPSLWSIIGIQFVLLWL) threads the bilayer. At 1098–1106 (VSGSRHCLL) the chain is on the cytoplasmic side.

This sequence belongs to the calcium channel subunit alpha-2/delta family. In terms of assembly, dimer formed of alpha-2-1 and delta-1 chains; disulfide-linked. Voltage-dependent calcium channels are multisubunit complexes, consisting of alpha-1 (CACNA1), alpha-2 (CACNA2D), beta (CACNB) and delta (CACNA2D) subunits in a 1:1:1:1 ratio. Post-translationally, proteolytically processed into subunits alpha-2-1 and delta-1 that are disulfide-linked. As to expression, skeletal muscle.

Its subcellular location is the membrane. The protein resides in the cell membrane. The alpha-2/delta subunit of voltage-dependent calcium channels regulates calcium current density and activation/inactivation kinetics of the calcium channel. Plays an important role in excitation-contraction coupling. The polypeptide is Voltage-dependent calcium channel subunit alpha-2/delta-1 (CACNA2D1) (Oryctolagus cuniculus (Rabbit)).